The following is a 352-amino-acid chain: Histidinol-phosphate aminotransferase (352 aa).

An N6-(pyridoxal phosphate)lysine modification is found at Lys-210.

This sequence belongs to the class-II pyridoxal-phosphate-dependent aminotransferase family. Histidinol-phosphate aminotransferase subfamily. Homodimer. Pyridoxal 5'-phosphate is required as a cofactor.

It carries out the reaction L-histidinol phosphate + 2-oxoglutarate = 3-(imidazol-4-yl)-2-oxopropyl phosphate + L-glutamate. The protein operates within amino-acid biosynthesis; L-histidine biosynthesis; L-histidine from 5-phospho-alpha-D-ribose 1-diphosphate: step 7/9. This chain is Histidinol-phosphate aminotransferase, found in Clostridium acetobutylicum (strain ATCC 824 / DSM 792 / JCM 1419 / IAM 19013 / LMG 5710 / NBRC 13948 / NRRL B-527 / VKM B-1787 / 2291 / W).